The primary structure comprises 76 residues: Conotoxin Vc6.3 (76 aa).

An N-terminal signal peptide occupies residues 1-22; that stretch reads MKLTCVMIVAVLFLTANTFATA. The propeptide occupies 23-50; that stretch reads DDPRNGLRDLFSIAHHEMKNPEASKLNE. 3 disulfides stabilise this stretch: Cys52–Cys66, Cys59–Cys70, and Cys67–Cys75.

It belongs to the conotoxin O1 superfamily. As to expression, expressed by the venom duct.

Its subcellular location is the secreted. The chain is Conotoxin Vc6.3 from Conus victoriae (Queen Victoria cone).